The chain runs to 732 residues: MIITKEIDLGQGKTISIETGRMAKQADGATVVRMGDTMVIATVVSSKKTPSPNQDFFPLQVEYREKYYAAGKFPGGFFKREARPSEKEILSARLIDRALRPLFPTGYYYETQVIINVISSDQQNDADVLGGLAASAAIMVSDIPFENAMSEVRVGRVNGQFIINPTIDELEGSDIDISIGGTAGTICMLEGEMKEISEAEMLEAIRFGHEAIKKLCALQDSVQAAVAKAKRPFAPLQVPSELGAFISDACKARLKELAYTALAKEERAERTKEIYGETLKSAVEHFSAAFSSEDLAADPSKALCTNEHIIEEEIHSVEKDVMRRMILDDAKRLDGRTLDQVRPISIDLGVIPRAHGSALFTRGETQALVAVTLGTKKDAQSVDTLTNSADKRFMLHYNFPPFSVGEVGRLGTTGRREIGHGNLAERAIRMVAPTEQEFPYTIRIVSEILESNGSSSMASVCGGTLALMDGGVPLKKAVSGIAMGLIKEGSEYAVLSDILGNEDHLGDMDFKVSGTRDGITACQMDIKIDGLDYHILETALEQARRGRFHILDKMEEAIPASREDLAHYAPRLTAIQVPVESIGLIIGKGGETIRSITEETGAEINIEDDGTVTIACSSNEGTKGAVEIIKALIAKPEVGTVYIGKVRDIRDELGAFVEFIPKTDGLVHISEIANERVAKVSDHLKVGERVKVKLVDIRKDPRTGKTRFALSIKAALDAPDPGTEAAAAETNS.

Asp-503 and Asp-509 together coordinate Mg(2+). The region spanning 570 to 629 is the KH domain; the sequence is PRLTAIQVPVESIGLIIGKGGETIRSITEETGAEINIEDDGTVTIACSSNEGTKGAVEII. Residues 639–713 form the S1 motif domain; the sequence is GTVYIGKVRD…GKTRFALSIK (75 aa).

This sequence belongs to the polyribonucleotide nucleotidyltransferase family. Mg(2+) is required as a cofactor.

Its subcellular location is the cytoplasm. The enzyme catalyses RNA(n+1) + phosphate = RNA(n) + a ribonucleoside 5'-diphosphate. Functionally, involved in mRNA degradation. Catalyzes the phosphorolysis of single-stranded polyribonucleotides processively in the 3'- to 5'-direction. The chain is Polyribonucleotide nucleotidyltransferase from Chlorobium phaeovibrioides (strain DSM 265 / 1930) (Prosthecochloris vibrioformis (strain DSM 265)).